The primary structure comprises 197 residues: Glycerol-3-phosphate acyltransferase (197 aa).

The next 5 helical transmembrane spans lie at 7–27, 56–76, 82–102, 116–136, and 157–177; these read PSIA…LLLT, LAAL…WIAW, DIGW…WLGF, FGLG…MLAI, and YFGR…IIWL.

It belongs to the PlsY family. Probably interacts with PlsX.

It is found in the cell inner membrane. The catalysed reaction is an acyl phosphate + sn-glycerol 3-phosphate = a 1-acyl-sn-glycero-3-phosphate + phosphate. Its pathway is lipid metabolism; phospholipid metabolism. Functionally, catalyzes the transfer of an acyl group from acyl-phosphate (acyl-PO(4)) to glycerol-3-phosphate (G3P) to form lysophosphatidic acid (LPA). This enzyme utilizes acyl-phosphate as fatty acyl donor, but not acyl-CoA or acyl-ACP. The protein is Glycerol-3-phosphate acyltransferase of Erythrobacter litoralis (strain HTCC2594).